The chain runs to 137 residues: Envelope glycoprotein L (137 aa).

An N-terminal signal peptide occupies residues methionine 1–alanine 25. Residues asparagine 23–leucine 128 are interaction with gH. 2 disulfide bridges follow: cysteine 28–cysteine 56 and cysteine 29–cysteine 79.

It belongs to the herpesviridae glycoprotein L family. In terms of assembly, interacts with glycoprotein H (gH); this interaction is necessary for the correct processing and cell surface expression of gH. The heterodimer gH/gL seems to interact with gB trimers during fusion. The heterodimer gH/gL interacts with host EPHA2 to facilitate virus internalization and fusion.

It is found in the virion membrane. The protein localises to the host cell membrane. Its subcellular location is the host Golgi apparatus. The protein resides in the host trans-Golgi network. The heterodimer glycoprotein H-glycoprotein L is required for the fusion of viral and plasma membranes leading to virus entry into the host cell. Acts as a functional inhibitor of gH and maintains gH in an inhibited form. Upon binding to host integrins, gL dissociates from gH leading to activation of the viral fusion glycoproteins gB and gH. The heterodimer gH/gL targets also host EPHA2 to promote viral entry. The protein is Envelope glycoprotein L of Homo sapiens (Human).